Here is a 411-residue protein sequence, read N- to C-terminus: 2-oxoglutarate-dependent dioxygenase AOP3 (411 aa).

The Fe2OG dioxygenase domain maps to 259–356; it reads GNASVGAKEA…RYAAALFSNP (98 aa). Fe cation is bound by residues His279, Asp281, and His336. Arg347 is a binding site for 2-oxoglutarate.

Belongs to the iron/ascorbate-dependent oxidoreductase family. The cofactor is Fe(2+). In terms of tissue distribution, not expressed.

Its function is as follows. 2-oxoglutarate-dependent dioxygenase involved in glucosinolates biosynthesis. Catalyzes the conversion of methylsulfinylalkyl glucosinolates to hydroxyalkyl glucosinolates. The protein is 2-oxoglutarate-dependent dioxygenase AOP3 (AOP3) of Arabidopsis thaliana (Mouse-ear cress).